The primary structure comprises 946 residues: ATP-dependent 6-phosphofructokinase subunit beta (946 aa).

An N-terminal catalytic PFK domain 1 region spans residues 1-559 (MISIVNGTST…HLANFMAMNT (559 aa)). ATP-binding positions include glycine 192, 256–257 (RC), and 286–289 (GDGS). A Mg(2+)-binding site is contributed by aspartate 287. Beta-D-fructose 6-phosphate-binding positions include 332–334 (SID), arginine 369, 376–378 (MGR), glutamate 433, arginine 461, and 467–470 (HVQR). The Proton acceptor role is filled by aspartate 334. Residues 560–573 (ANHEKPTLPREKRK) form an interdomain linker region. The interval 574-946 (KIAIINIGAP…LVGRTRLDKP (373 aa)) is C-terminal regulatory PFK domain 2. Beta-D-fructose 2,6-bisphosphate contacts are provided by residues arginine 644, 702–706 (TISNN), 747–749 (QGG), lysine 833, 839–842 (HVQQ), and arginine 920.

This sequence belongs to the phosphofructokinase type A (PFKA) family. ATP-dependent PFK group I subfamily. Eukaryotic two domain clade 'E' sub-subfamily. Heterooctamer of 4 alpha and 4 beta chains. The cofactor is Mg(2+).

Its subcellular location is the cytoplasm. The enzyme catalyses beta-D-fructose 6-phosphate + ATP = beta-D-fructose 1,6-bisphosphate + ADP + H(+). It participates in carbohydrate degradation; glycolysis; D-glyceraldehyde 3-phosphate and glycerone phosphate from D-glucose: step 3/4. With respect to regulation, allosterically activated by ADP, AMP, or fructose 2,6-bisphosphate, and allosterically inhibited by ATP or citrate. Catalyzes the phosphorylation of D-fructose 6-phosphate to fructose 1,6-bisphosphate by ATP, the first committing step of glycolysis. The polypeptide is ATP-dependent 6-phosphofructokinase subunit beta (PFK2) (Candida albicans (Yeast)).